We begin with the raw amino-acid sequence, 492 residues long: N-succinylglutamate 5-semialdehyde dehydrogenase (492 aa).

Position 220-225 (220-225 (GSASTG)) interacts with NAD(+). Residues Glu-243 and Cys-277 contribute to the active site.

This sequence belongs to the aldehyde dehydrogenase family. AstD subfamily.

It catalyses the reaction N-succinyl-L-glutamate 5-semialdehyde + NAD(+) + H2O = N-succinyl-L-glutamate + NADH + 2 H(+). It functions in the pathway amino-acid degradation; L-arginine degradation via AST pathway; L-glutamate and succinate from L-arginine: step 4/5. Catalyzes the NAD-dependent reduction of succinylglutamate semialdehyde into succinylglutamate. This Salmonella paratyphi C (strain RKS4594) protein is N-succinylglutamate 5-semialdehyde dehydrogenase.